We begin with the raw amino-acid sequence, 141 residues long: High mobility group B protein 3 (141 aa).

2 stretches are compositionally biased toward basic and acidic residues: residues 1–12 and 70–110; these read MKGAKSKAETRS and GGEK…LEEG. 2 disordered regions span residues 1–40 and 54–141; these read MKGA…RPSS and KEEH…EDDD. A DNA-binding region (HMG box) is located at residues 35-104; it reads PKRPSSAFFV…EYEKNMKAYN (70 aa). Position 122 is a phosphoserine (S122). Over residues 124–141 the composition is skewed to acidic residues; sequence VNDEDDAEDGSEEEEDDD.

Belongs to the HMGB family. Expressed in lateral roots, root tips, stems, cotyledons, leaves and flowers (excluding ovary and pedicels).

The protein localises to the nucleus. It localises to the cytoplasm. Its subcellular location is the cytosol. In terms of biological role, binds preferentially double-stranded DNA. This Arabidopsis thaliana (Mouse-ear cress) protein is High mobility group B protein 3 (HMGB3).